We begin with the raw amino-acid sequence, 774 residues long: Lysyl oxidase homolog 2 (774 aa).

An N-terminal signal peptide occupies residues 1-25 (MERPLCSHLCSCLAMLALLSPLSLA). 4 consecutive SRCR domains span residues 58–159 (LRLA…VVCS), 188–302 (IRAI…VSCV), 326–425 (VRLR…VRCN), and 435–544 (LRLN…VACS). Cystine bridges form between Cys84-Cys148, Cys97-Cys158, Cys128-Cys138, Cys218-Cys291, Cys231-Cys301, Cys265-Cys275, Cys351-Cys414, Cys364-Cys424, and Cys395-Cys405. An N-linked (GlcNAc...) asparagine glycan is attached at Asn288. Asn455 carries N-linked (GlcNAc...) (complex) asparagine glycosylation. 3 cysteine pairs are disulfide-bonded: Cys464/Cys530, Cys477/Cys543, and Cys511/Cys521. The segment at 548–751 (PDLVLNAEMV…WMYNCHIGGS (204 aa)) is lysyl-oxidase like. The Ca(2+) site is built by Asp549 and Leu550. Disulfide bonds link Cys573–Cys625, Cys579–Cys695, Cys657–Cys673, and Cys663–Cys685. His626, His628, and His630 together coordinate Cu cation. N-linked (GlcNAc...) (complex) asparagine glycosylation is present at Asn644. Positions 653–689 (KASFCLEDTECEGDIQKNYECANFGDQGITMGCWDMY) form a cross-link, lysine tyrosylquinone (Lys-Tyr). Tyr689 carries the post-translational modification 2',4',5'-topaquinone. Glu722, Asp724, Asn727, and Asn728 together coordinate Ca(2+). A disulfide bridge links Cys732 with Cys746.

Belongs to the lysyl oxidase family. In terms of assembly, component of some chromatin repressor complex. Interacts with SNAI1. Interacts with TAF10. Interacts with HSPA5. Interacts with EFEMP2. It depends on Cu cation as a cofactor. Lysine tyrosylquinone residue is required as a cofactor. The lysine tyrosylquinone cross-link (LTQ) is generated by condensation of the epsilon-amino group of a lysine with a topaquinone produced by oxidation of tyrosine. Post-translationally, N-glycosylated. N-glycosylation on Asn-455 and Asn-644 may be essential for proper folding and secretion; may be composed of a fucosylated carbohydrates attached to a trimannose N-linked glycan core. As to expression, expressed in many tissues. Highest expression in reproductive tissues, placenta, uterus and prostate. In esophageal epithelium, expressed in the basal, prickle and granular cell layers. Up-regulated in a number of cancers cells and tissues.

It localises to the secreted. It is found in the extracellular space. Its subcellular location is the extracellular matrix. The protein localises to the basement membrane. The protein resides in the nucleus. It localises to the chromosome. It is found in the endoplasmic reticulum. It catalyses the reaction L-lysyl-[protein] + O2 + H2O = (S)-2-amino-6-oxohexanoyl-[protein] + H2O2 + NH4(+). With respect to regulation, according to some reports, it is inhibited by beta-aminopropionitrile (BAPN). According to another report, it is not inhibited by beta-aminopropionitrile (BAPN). Specifically inhibited by a mouse monoclonal antibody AB0023, inhibition occurs in a non-competitive manner. Its function is as follows. Mediates the post-translational oxidative deamination of lysine residues on target proteins leading to the formation of deaminated lysine (allysine). Acts as a transcription corepressor and specifically mediates deamination of trimethylated 'Lys-4' of histone H3 (H3K4me3), a specific tag for epigenetic transcriptional activation. Shows no activity against histone H3 when it is trimethylated on 'Lys-9' (H3K9me3) or 'Lys-27' (H3K27me3) or when 'Lys-4' is monomethylated (H3K4me1) or dimethylated (H3K4me2). Also mediates deamination of methylated TAF10, a member of the transcription factor IID (TFIID) complex, which induces release of TAF10 from promoters, leading to inhibition of TFIID-dependent transcription. LOXL2-mediated deamination of TAF10 results in transcriptional repression of genes required for embryonic stem cell pluripotency including POU5F1/OCT4, NANOG, KLF4 and SOX2. Involved in epithelial to mesenchymal transition (EMT) via interaction with SNAI1 and participates in repression of E-cadherin CDH1, probably by mediating deamination of histone H3. During EMT, involved with SNAI1 in negatively regulating pericentromeric heterochromatin transcription. SNAI1 recruits LOXL2 to pericentromeric regions to oxidize histone H3 and repress transcription which leads to release of heterochromatin component CBX5/HP1A, enabling chromatin reorganization and acquisition of mesenchymal traits. Interacts with the endoplasmic reticulum protein HSPA5 which activates the IRE1-XBP1 pathway of the unfolded protein response, leading to expression of several transcription factors involved in EMT and subsequent EMT induction. Involved in E-cadherin repression following hypoxia, a hallmark of EMT believed to amplify tumor aggressiveness, suggesting that it may play a role in tumor progression. When secreted into the extracellular matrix, promotes cross-linking of extracellular matrix proteins by mediating oxidative deamination of peptidyl lysine residues in precursors to fibrous collagen and elastin. Acts as a regulator of sprouting angiogenesis, probably via collagen IV scaffolding. Acts as a regulator of chondrocyte differentiation, probably by regulating expression of factors that control chondrocyte differentiation. This Homo sapiens (Human) protein is Lysyl oxidase homolog 2 (LOXL2).